The sequence spans 320 residues: 1-aminocyclopropane-1-carboxylate oxidase 2 (320 aa).

The stretch at 111-143 (DEYRTAMKDFGKRLENLAEDLLDLLCENLGLEK) forms a coiled coil. The Fe2OG dioxygenase domain maps to 156–256 (PTFGTKVSNY…RMSVASFYNP (101 aa)). Residues His180, Asp182, and His237 each contribute to the Fe cation site. Arg247 provides a ligand contact to 2-oxoglutarate.

Belongs to the iron/ascorbate-dependent oxidoreductase family. Fe(2+) serves as cofactor. It depends on Cu(2+) as a cofactor. Expressed in vegetative tissues. Constitutively expressed in leaves and blades. In ethylene exposed etiolated seedlings, localized in cells at the outer side of the exaggerated hook in an ethylene-dependent manner and following an ethylene sensitive pattern. Also detected in the root tip when treated by ethylene.

It carries out the reaction 1-aminocyclopropane-1-carboxylate + L-ascorbate + O2 = ethene + L-dehydroascorbate + hydrogen cyanide + CO2 + 2 H2O. Its pathway is alkene biosynthesis; ethylene biosynthesis via S-adenosyl-L-methionine; ethylene from S-adenosyl-L-methionine: step 2/2. Functionally, enzyme involved in the ethylene biosynthesis. Required to mediate the 1-aminocyclopropane-1-carboxylic acid (ACC)-mediated reversion of the ABA-induced inhibition of seed germination via endosperm rupture. May promote stem elongation by maximizing the extensibility cells, possibly by activating ethylene biosynthesis, in response to very-long-chain fatty acids (VLCFAs C20:0 to C30:0). The protein is 1-aminocyclopropane-1-carboxylate oxidase 2 (ACO2) of Arabidopsis thaliana (Mouse-ear cress).